We begin with the raw amino-acid sequence, 334 residues long: Methionyl-tRNA formyltransferase (334 aa).

111–114 (SILP) is a (6S)-5,6,7,8-tetrahydrofolate binding site.

Belongs to the Fmt family.

It catalyses the reaction L-methionyl-tRNA(fMet) + (6R)-10-formyltetrahydrofolate = N-formyl-L-methionyl-tRNA(fMet) + (6S)-5,6,7,8-tetrahydrofolate + H(+). In terms of biological role, attaches a formyl group to the free amino group of methionyl-tRNA(fMet). The formyl group appears to play a dual role in the initiator identity of N-formylmethionyl-tRNA by promoting its recognition by IF2 and preventing the misappropriation of this tRNA by the elongation apparatus. In Gloeothece citriformis (strain PCC 7424) (Cyanothece sp. (strain PCC 7424)), this protein is Methionyl-tRNA formyltransferase.